Reading from the N-terminus, the 869-residue chain is Speckle targeted PIP5K1A-regulated poly(A) polymerase (869 aa).

Residues 16–46 form a Matrin-type zinc finger; the sequence is FRCCLCHVTTANRPSLDAHLGGRKHRHLVEL. In terms of domain architecture, RRM spans 56–128; it reads RSVFVSGFPR…HRLRVRPREQ (73 aa). The disordered stretch occupies residues 111–147; the sequence is QPQHTLGGHRLRVRPREQKEFQSPASKSPKGAAPDSH. Position 205 (S205) interacts with ATP. Mg(2+) is bound by residues D216 and D218. The UTP site is built by D216 and D218. A disordered region spans residues 252–315; it reads QALACTPASP…PASPLQEDRG (64 aa). Residues 259-269 are compositionally biased toward pro residues; that stretch reads ASPPDSQPPSP. The span at 279 to 290 shows a compositional bias: polar residues; that stretch reads TPSSSLAPQTPD. N391 serves as a coordination point for ATP. UTP-binding residues include N391, R413, Y431, and H548. Positions 490–548 constitute a PAP-associated domain; the sequence is LSSLLAQFFSCVSCWDLRGSLLSLREGQALPVAGDLPSNRWEGLRLGPMNLQDPFDLSH. The segment at 597-869 is KA1; binds the bulging loops of U6 snRNA but is dispensable for terminal uridylyltransferase activity; that stretch reads SSPSSLLSAT…VFLPQALRNL (273 aa). 2 stretches are compositionally biased toward basic and acidic residues: residues 637–648 and 660–686; these read GTKRLRSDRGGP and LKLD…HSED. 2 disordered regions span residues 637–686 and 720–755; these read GTKR…HSED and LATG…TGRG. Residues S684 and S748 each carry the phosphoserine modification.

This sequence belongs to the DNA polymerase type-B-like family. As to quaternary structure, associates with the cleavage and polyadenylation specificity factor (CPSF) complex. Interacts with CPSF1 and CPSF3; the interaction is direct. Interacts with PIP5K1A. Mg(2+) serves as cofactor. The cofactor is Mn(2+). In terms of processing, phosphorylated by CK1 in the proline-rich (Pro-rich) region.

The protein localises to the nucleus. Its subcellular location is the nucleolus. It localises to the nucleus speckle. It carries out the reaction RNA(n) + UTP = RNA(n)-3'-uridine ribonucleotide + diphosphate. It catalyses the reaction RNA(n) + ATP = RNA(n)-3'-adenine ribonucleotide + diphosphate. Adenylyltransferase activity is specifically phosphatidylinositol 4,5-bisphosphate (PtdIns(4,5)P2). Poly(A) polymerase that creates the 3'-poly(A) tail of specific pre-mRNAs. Localizes to nuclear speckles together with PIP5K1A and mediates polyadenylation of a select set of mRNAs, such as HMOX1. In addition to polyadenylation, it is also required for the 3'-end cleavage of pre-mRNAs: binds to the 3'UTR of targeted pre-mRNAs and promotes the recruitment and assembly of the CPSF complex on the 3'UTR of pre-mRNAs. In addition to adenylyltransferase activity, also has uridylyltransferase activity. However, the ATP ratio is higher than UTP in cells, suggesting that it functions primarily as a poly(A) polymerase. Acts as a specific terminal uridylyltransferase for U6 snRNA in vitro: responsible for a controlled elongation reaction that results in the restoration of the four 3'-terminal UMP-residues found in newly transcribed U6 snRNA. Not involved in replication-dependent histone mRNA degradation. This Ailuropoda melanoleuca (Giant panda) protein is Speckle targeted PIP5K1A-regulated poly(A) polymerase (TUT1).